The primary structure comprises 364 residues: Protein PTOV1 homolog (364 aa).

The segment at 187-207 (AKRKPGVKTPKQPQPEEPPPV) is disordered.

This sequence belongs to the Mediator complex subunit 25 family. PTOV1 subfamily.

This is Protein PTOV1 homolog from Drosophila melanogaster (Fruit fly).